Consider the following 576-residue polypeptide: N-acetylmuramoyl-L-alanine amidase (576 aa).

Residues 1 to 21 form the signal peptide; sequence MAQGVLWILLGLLLWSDPGTA. Asn-77 carries an N-linked (GlcNAc...) asparagine glycan. Ser-239 bears the Phosphoserine mark. A deamidated asparagine mark is found at Asn-274 and Asn-322. Asn-367 is a glycosylation site (N-linked (GlcNAc...) asparagine). In terms of domain architecture, N-acetylmuramoyl-L-alanine amidase spans 406–532; sequence FLYVHHTYVP…RQLVRTDCPG (127 aa). His-410 lines the Zn(2+) pocket. Cys-419 and Cys-425 are oxidised to a cystine. An N-linked (GlcNAc...) asparagine glycan is attached at Asn-485. Zn(2+) contacts are provided by His-522 and Cys-530. The disordered stretch occupies residues 550–576; sequence KPRPARSVSKRSRREPPPRTLPATDLQ.

It belongs to the N-acetylmuramoyl-L-alanine amidase 2 family. The cofactor is Zn(2+). As to expression, strongly expressed in liver and fetal liver, and secreted into serum. Expressed to a much lesser extent in transverse colon, lymph nodes, heart, thymus, pancreas, descending colon, stomach and testis. Isoform 2 is not detected in the liver or serum.

It is found in the secreted. Its subcellular location is the membrane. The enzyme catalyses Hydrolyzes the link between N-acetylmuramoyl residues and L-amino acid residues in certain cell-wall glycopeptides.. Functionally, may play a scavenger role by digesting biologically active peptidoglycan (PGN) into biologically inactive fragments. Has no direct bacteriolytic activity. The polypeptide is N-acetylmuramoyl-L-alanine amidase (PGLYRP2) (Homo sapiens (Human)).